Here is a 450-residue protein sequence, read N- to C-terminus: Exodeoxyribonuclease 7 large subunit (450 aa).

It belongs to the XseA family. Heterooligomer composed of large and small subunits.

The protein resides in the cytoplasm. The enzyme catalyses Exonucleolytic cleavage in either 5'- to 3'- or 3'- to 5'-direction to yield nucleoside 5'-phosphates.. Bidirectionally degrades single-stranded DNA into large acid-insoluble oligonucleotides, which are then degraded further into small acid-soluble oligonucleotides. The protein is Exodeoxyribonuclease 7 large subunit of Listeria innocua serovar 6a (strain ATCC BAA-680 / CLIP 11262).